The following is a 464-amino-acid chain: NADH-quinone oxidoreductase subunit N 1 (464 aa).

The next 14 helical transmembrane spans lie at 6–26, 33–53, 65–85, 98–118, 122–142, 155–175, 192–212, 237–257, 259–279, 285–305, 312–332, 356–376, 401–421, and 436–456; these read ILPE…ELFL, FLSV…FFVN, VDAL…FVLL, YGEL…MISS, AIIF…VGLF, YLVI…LVYA, FALG…AVPF, IGMY…FPDW, YVVM…AYAQ, LLAY…TAVD, LLFY…VLAI, LASM…AAVF, ASLI…LYSG, and FTVL…HVVL.

The protein belongs to the complex I subunit 2 family. NDH-1 is composed of 14 different subunits. Subunits NuoA, H, J, K, L, M, N constitute the membrane sector of the complex.

Its subcellular location is the cell inner membrane. The enzyme catalyses a quinone + NADH + 5 H(+)(in) = a quinol + NAD(+) + 4 H(+)(out). In terms of biological role, NDH-1 shuttles electrons from NADH, via FMN and iron-sulfur (Fe-S) centers, to quinones in the respiratory chain. The immediate electron acceptor for the enzyme in this species is believed to be ubiquinone. Couples the redox reaction to proton translocation (for every two electrons transferred, four hydrogen ions are translocated across the cytoplasmic membrane), and thus conserves the redox energy in a proton gradient. This Aquifex aeolicus (strain VF5) protein is NADH-quinone oxidoreductase subunit N 1.